The sequence spans 212 residues: uncharacterized protein (212 aa).

The protein belongs to the methyltransferase superfamily.

This is an uncharacterized protein from Synechocystis sp. (strain ATCC 27184 / PCC 6803 / Kazusa).